The chain runs to 251 residues: Long-distance movement protein (251 aa).

Residues 25-134 (SGKSCNSGGA…VAQPQQRWAK (110 aa)) are disordered. The Nuclear localization signal signature appears at 108-122 (RPRRRAGRSGGMDPR). Residues 149-153 (LPSLL) carry the Nuclear export signal motif.

As to quaternary structure, homooligomer. Interacts with host FIB2; this interaction, is required for ORF3 protein transiting through host Cajal body and nucleolus, relocalization of fibrillarin to the cytoplasm, and in presence of viral RNA, leads to the formation of stable RNPs.

Its subcellular location is the host cytoplasm. The protein localises to the host nucleus. It localises to the host nucleolus. Functionally, protects and provides long-distance movement to viral RNA. Self associates and binds viral RNA and fibrillarin to form filamentous ribonucleoproteins (RNPs) protected from RNase. ORF3 protein actually fulfills functions that are usually provided by capsid protein, which is absent from umbraviruses' genome. The protein is Long-distance movement protein (ORF3) of Clitoria (Hyacinth bean).